The sequence spans 379 residues: Homoserine O-acetyltransferase (379 aa).

The region spanning 52-356 (NVVVVLHALT…VYGHDGFLVE (305 aa)) is the AB hydrolase-1 domain. The active-site Nucleophile is the Ser-157. Residue Arg-227 coordinates substrate. Active-site residues include Asp-320 and His-350. Asp-351 is a substrate binding site.

Belongs to the AB hydrolase superfamily. MetX family. In terms of assembly, homodimer.

It localises to the cytoplasm. The enzyme catalyses L-homoserine + acetyl-CoA = O-acetyl-L-homoserine + CoA. Its pathway is amino-acid biosynthesis; L-methionine biosynthesis via de novo pathway; O-acetyl-L-homoserine from L-homoserine: step 1/1. Transfers an acetyl group from acetyl-CoA to L-homoserine, forming acetyl-L-homoserine. In Mycobacterium bovis (strain ATCC BAA-935 / AF2122/97), this protein is Homoserine O-acetyltransferase.